Here is a 441-residue protein sequence, read N- to C-terminus: EP1-like glycoprotein 3 (441 aa).

The N-terminal stretch at 1-22 is a signal peptide; sequence MKFSITLALCFTLSIFLIGSQA. The 131-residue stretch at 29–159 folds into the Bulb-type lectin domain; sequence QFRVVNEGGY…SGKFVWQSFD (131 aa). Asn-102, Asn-258, and Asn-269 each carry an N-linked (GlcNAc...) asparagine glycan. The stretch at 254-296 is one WD repeat; that stretch reads GSKFNVSTFLSRPKHNATLSFIRLESDGNIRVWSYSTLATSTA. A PAN domain is found at 356–433; that stretch reads CDPKTFHYFK…SSLVAYVKAP (78 aa). Cystine bridges form between Cys-387–Cys-409 and Cys-391–Cys-397.

Post-translationally, phosphorylated on tyrosine.

It localises to the secreted. The protein resides in the cell wall. May be involved in a cell-to cell programmed cell death (PCD) signaling mechanism. This is EP1-like glycoprotein 3 from Arabidopsis thaliana (Mouse-ear cress).